The sequence spans 272 residues: Phosphoglycolate phosphatase 1 (272 aa).

D19 serves as the catalytic Nucleophile. Mg(2+) contacts are provided by D19, D21, and D182.

Belongs to the HAD-like hydrolase superfamily. CbbY/CbbZ/Gph/YieH family. It depends on Mg(2+) as a cofactor.

The catalysed reaction is 2-phosphoglycolate + H2O = glycolate + phosphate. It participates in organic acid metabolism; glycolate biosynthesis; glycolate from 2-phosphoglycolate: step 1/1. In terms of biological role, specifically catalyzes the dephosphorylation of 2-phosphoglycolate. Is involved in the dissimilation of the intracellular 2-phosphoglycolate formed during the DNA repair of 3'-phosphoglycolate ends, a major class of DNA lesions induced by oxidative stress. The protein is Phosphoglycolate phosphatase 1 of Pseudomonas aeruginosa (strain ATCC 15692 / DSM 22644 / CIP 104116 / JCM 14847 / LMG 12228 / 1C / PRS 101 / PAO1).